Reading from the N-terminus, the 479-residue chain is mRNA export factor ICP27 homolog (479 aa).

The segment covering 1-15 (MVPSQRLSRTSSISS) has biased composition (low complexity). 2 disordered regions span residues 1–78 (MVPS…SSVV) and 92–210 (KWDL…NKPW). Residues 35–44 (TDCDMDPMEG) are compositionally biased toward acidic residues. A compositionally biased stretch (basic and acidic residues) spans 132–142 (EVHGCTDESYG). Residues cysteine 354, histidine 445, cysteine 449, and cysteine 454 each contribute to the Zn(2+) site. The CHC2-type zinc finger occupies 354–454 (CFLPNTRDYN…HTRDCRSASC (101 aa)).

It belongs to the HHV-1 ICP27 protein family. Interacts with host XPO1 and with the XPO1 export pathway components small GTPase RAN and nucleoporin NUP214. Interacts with host SPEN, OTT1 and OTT3. Interacts with host SRSF1, SRSF3, SRSF7 and SRPK1. Interacts with host DHX9; this interaction may have an inhibitory effect on virion production. Interacts (via N-terminus) with host NXF1; this interaction plays a role in mRNA export. Post-translationally, phosphorylated by cellular protein kinase CK2.

It is found in the host nucleus. Its subcellular location is the host cytoplasm. Its function is as follows. Promotes the nuclear export of a subset of early and late viral mRNAs by interacting with mRNAs and cellular export proteins. Additionally may prevent the establishment of cellular antiviral state, by acting as an alternative splicing factor for cellular RNAs such as STAT1, resulting in a STAT1 mRNA incapable of producing the STAT1alpha isoform. The sequence is that of mRNA export factor ICP27 homolog from Homo sapiens (Human).